The chain runs to 285 residues: Protein FD (285 aa).

The span at 1–12 shows a compositional bias: basic residues; sequence MLSSAKHQRNHR. 5 disordered regions span residues 1-59, 79-107, 115-134, 198-236, and 257-285; these read MLSS…QKRS, NRHS…NSIF, LNQE…NGDS, SSSF…ARKQ, and KRQQ…TAPF. Over residues 13-25 the composition is skewed to polar residues; sequence LSATNKNQTLTKV. Residues 26-50 show a composition bias toward low complexity; it reads SSISSSSPSSSSSSSSTSSSSPLPS. Polar residues predominate over residues 98–107; sequence HHNQNPNSIF. The bZIP domain occupies 214 to 277; it reads GNRRHKRMIK…AIQQPKKNTL (64 aa). The interval 216-235 is basic motif; sequence RRHKRMIKNRESAARSRARK. A leucine-zipper region spans residues 242–263; sequence LELEVAHLQAENARLKRQQDQL. A compositionally biased stretch (polar residues) spans 272–285; the sequence is PKKNTLQRSSTAPF. The residue at position 282 (Thr282) is a Phosphothreonine.

This sequence belongs to the bZIP family. As to quaternary structure, self-interacts. Interacts with FT and FDP/BZIP27. Interacts with GRF3 and GRF4, and in a calcium-independent manner, with CPK6 and CPK33. Phosphorylated at Thr-282 in a calcium-dependent manner by CPK6 and CPK33. As to expression, highly expressed in shoot apex.

It is found in the nucleus. Functionally, transcription factor required for the transition to flowering promoted by FT. This chain is Protein FD, found in Arabidopsis thaliana (Mouse-ear cress).